Here is a 202-residue protein sequence, read N- to C-terminus: Small ribosomal subunit protein uS5 (202 aa).

Positions 50–113 (LKQEILNINV…REAKLNLTPV (64 aa)) constitute an S5 DRBM domain.

It belongs to the universal ribosomal protein uS5 family. As to quaternary structure, part of the 30S ribosomal subunit. Contacts protein S4.

In terms of biological role, with S4 and S12 plays an important role in translational accuracy. In Pyrobaculum islandicum (strain DSM 4184 / JCM 9189 / GEO3), this protein is Small ribosomal subunit protein uS5.